The following is a 175-amino-acid chain: RNA pyrophosphohydrolase (175 aa).

Residues 8–159 form the Nudix hydrolase domain; sequence PYRTCVGMML…KRPVYERVVK (152 aa). The short motif at 47-68 is the Nudix box element; sequence GGVDPGEDPWTAAKRELYEETS.

This sequence belongs to the Nudix hydrolase family. RppH subfamily. Requires a divalent metal cation as cofactor.

Functionally, accelerates the degradation of transcripts by removing pyrophosphate from the 5'-end of triphosphorylated RNA, leading to a more labile monophosphorylated state that can stimulate subsequent ribonuclease cleavage. This chain is RNA pyrophosphohydrolase, found in Rhodopseudomonas palustris (strain BisB18).